We begin with the raw amino-acid sequence, 60 residues long: Large ribosomal subunit protein uL30 (60 aa).

The protein belongs to the universal ribosomal protein uL30 family. Part of the 50S ribosomal subunit.

This is Large ribosomal subunit protein uL30 from Staphylococcus epidermidis (strain ATCC 35984 / DSM 28319 / BCRC 17069 / CCUG 31568 / BM 3577 / RP62A).